The primary structure comprises 440 residues: Adenylosuccinate lyase (440 aa).

Residues 4 to 5 (RY), 67 to 69 (KHD), and 93 to 94 (TS) each bind N(6)-(1,2-dicarboxyethyl)-AMP. The active-site Proton donor/acceptor is His-141. Gln-212 lines the N(6)-(1,2-dicarboxyethyl)-AMP pocket. The active-site Proton donor/acceptor is Ser-262. N(6)-(1,2-dicarboxyethyl)-AMP contacts are provided by residues Ser-263, 268–270 (KRN), Asn-276, and 307–311 (SVERF).

This sequence belongs to the lyase 1 family. Adenylosuccinate lyase subfamily. As to quaternary structure, homotetramer. Residues from neighboring subunits contribute catalytic and substrate-binding residues to each active site.

The enzyme catalyses N(6)-(1,2-dicarboxyethyl)-AMP = fumarate + AMP. It catalyses the reaction (2S)-2-[5-amino-1-(5-phospho-beta-D-ribosyl)imidazole-4-carboxamido]succinate = 5-amino-1-(5-phospho-beta-D-ribosyl)imidazole-4-carboxamide + fumarate. Its pathway is purine metabolism; AMP biosynthesis via de novo pathway; AMP from IMP: step 2/2. It participates in purine metabolism; IMP biosynthesis via de novo pathway; 5-amino-1-(5-phospho-D-ribosyl)imidazole-4-carboxamide from 5-amino-1-(5-phospho-D-ribosyl)imidazole-4-carboxylate: step 2/2. Catalyzes two reactions in de novo purine nucleotide biosynthesis. Catalyzes the breakdown of 5-aminoimidazole- (N-succinylocarboxamide) ribotide (SAICAR or 2-[5-amino-1-(5-phospho-beta-D-ribosyl)imidazole-4-carboxamido]succinate) to 5-aminoimidazole-4-carboxamide ribotide (AICAR or 5-amino-1-(5-phospho-beta-D-ribosyl)imidazole-4-carboxamide) and fumarate, and of adenylosuccinate (ADS or N(6)-(1,2-dicarboxyethyl)-AMP) to adenosine monophosphate (AMP) and fumarate. This is Adenylosuccinate lyase (purB) from Helicobacter pylori (strain J99 / ATCC 700824) (Campylobacter pylori J99).